The sequence spans 194 residues: Ribonuclease HII (194 aa).

Residues 3–193 (ILTAGVDEAG…VRNLLAQQAL (191 aa)) form the RNase H type-2 domain. A divalent metal cation is bound by residues Asp9, Glu10, and Asp101.

This sequence belongs to the RNase HII family. Mn(2+) serves as cofactor. The cofactor is Mg(2+).

The protein resides in the cytoplasm. The enzyme catalyses Endonucleolytic cleavage to 5'-phosphomonoester.. Its function is as follows. Endonuclease that specifically degrades the RNA of RNA-DNA hybrids. This Neisseria meningitidis serogroup B (strain ATCC BAA-335 / MC58) protein is Ribonuclease HII (rnhB).